The primary structure comprises 212 residues: Protein GrpE (212 aa).

Residues 1–68 (MAETSNNKTS…ELESAKKEIE (68 aa)) are disordered. Basic and acidic residues predominate over residues 9–30 (TSEEAKANEKKSQSETLEESKL). Over residues 40–60 (ETTQTESMETAETETSLQTEL) the composition is skewed to low complexity.

It belongs to the GrpE family. In terms of assembly, homodimer.

It localises to the cytoplasm. Its function is as follows. Participates actively in the response to hyperosmotic and heat shock by preventing the aggregation of stress-denatured proteins, in association with DnaK and GrpE. It is the nucleotide exchange factor for DnaK and may function as a thermosensor. Unfolded proteins bind initially to DnaJ; upon interaction with the DnaJ-bound protein, DnaK hydrolyzes its bound ATP, resulting in the formation of a stable complex. GrpE releases ADP from DnaK; ATP binding to DnaK triggers the release of the substrate protein, thus completing the reaction cycle. Several rounds of ATP-dependent interactions between DnaJ, DnaK and GrpE are required for fully efficient folding. This Leptospira interrogans serogroup Icterohaemorrhagiae serovar copenhageni (strain Fiocruz L1-130) protein is Protein GrpE.